The chain runs to 861 residues: E3 ubiquitin-protein ligase HECTD3 (861 aa).

Alanine 2 is subject to N-acetylalanine. Serine 12 carries the post-translational modification Phosphoserine. Residues aspartate 219–glutamate 397 form the DOC domain. In terms of domain architecture, HECT spans tyrosine 512–serine 857. The active-site Glycyl thioester intermediate is the cysteine 823.

In terms of assembly, interacts with TRIOBP. Interacts with STX8.

It localises to the cytoplasm. Its subcellular location is the perinuclear region. It carries out the reaction S-ubiquitinyl-[E2 ubiquitin-conjugating enzyme]-L-cysteine + [acceptor protein]-L-lysine = [E2 ubiquitin-conjugating enzyme]-L-cysteine + N(6)-ubiquitinyl-[acceptor protein]-L-lysine.. It functions in the pathway protein modification; protein ubiquitination. In terms of biological role, E3 ubiquitin ligases accepts ubiquitin from an E2 ubiquitin-conjugating enzyme in the form of a thioester and then directly transfers the ubiquitin to targeted substrates. Mediates ubiquitination of TRIOBP and its subsequent proteasomal degradation, thus facilitating cell cycle progression by regulating the turn-over of TRIOBP. Mediates also ubiquitination of STX8. The polypeptide is E3 ubiquitin-protein ligase HECTD3 (HECTD3) (Homo sapiens (Human)).